The chain runs to 542 residues: Cytochrome P450 27C1 (542 aa).

Residues 1 to 80 (MQTSAMALLA…LAAMPGPRTL (80 aa)) constitute a mitochondrion transit peptide. A disordered region spans residues 20–75 (APERGGLLGGGAPRRPQPAGARLPAGARAEDKGAGRPGSPPGGGRAEGPRSLAAMP). Residues 32-46 (PRRPQPAGARLPAGA) show a composition bias toward low complexity. Heme is bound at residue Cys-488.

It belongs to the cytochrome P450 family. It depends on heme as a cofactor. In terms of tissue distribution, widely expressed, with highest levels in the liver, kidney and pancreas. As to expression, expressed in the skin (at protein level).

It is found in the mitochondrion membrane. It carries out the reaction all-trans-retinol + 2 reduced [adrenodoxin] + O2 + 2 H(+) = all-trans-3,4-didehydroretinol + 2 oxidized [adrenodoxin] + 2 H2O. The enzyme catalyses all-trans-retinol + 2 reduced [adrenodoxin] + O2 + 2 H(+) = all-trans-4-hydroxyretinol + 2 oxidized [adrenodoxin] + H2O. It catalyses the reaction all-trans-retinol + 2 reduced [adrenodoxin] + O2 + 2 H(+) = all-trans-3-hydroxyretinol + 2 oxidized [adrenodoxin] + H2O. The protein operates within cofactor metabolism; retinol metabolism. A cytochrome P450 monooxygenase that catalyzes the 3,4 desaturation of all-trans-retinol (also called vitamin A1) to all-trans-3,4-didehydroretinol (also called vitamin A2) in the skin. Desaturates with lower efficiency all-trans retinal and all-trans retinoic acid. Forms minor amounts of 3-hydroxy and 4-hydroxy all-trans-retinol derivatives. Mechanistically, uses molecular oxygen inserting one oxygen atom into a substrate and reducing the second into a water molecule. Two electrons are provided by NADPH via a two-protein mitochondrial transfer system comprising flavoprotein FDXR (adrenodoxin/ferredoxin reductase) and nonheme iron-sulfur protein FDX1 or FDX2 (adrenodoxin/ferredoxin). The protein is Cytochrome P450 27C1 of Homo sapiens (Human).